A 196-amino-acid polypeptide reads, in one-letter code: Peroxynitrite isomerase (196 aa).

The short motif at 46 to 52 is the GXWXGXG element; it reads GVWRGRG. Histidine 186 lines the heme b pocket.

This sequence belongs to the nitrobindin family. As to quaternary structure, homodimer. The cofactor is heme b.

The catalysed reaction is peroxynitrite = nitrate. Its pathway is nitrogen metabolism. Functionally, heme-binding protein able to scavenge peroxynitrite and to protect free L-tyrosine against peroxynitrite-mediated nitration, by acting as a peroxynitrite isomerase that converts peroxynitrite to nitrate. Therefore, this protein likely plays a role in peroxynitrite sensing and in the detoxification of reactive nitrogen and oxygen species (RNS and ROS, respectively). Is able to bind nitric oxide (NO) in vitro, but may act as a sensor of peroxynitrite levels in vivo. The sequence is that of Peroxynitrite isomerase from Salinispora tropica (strain ATCC BAA-916 / DSM 44818 / JCM 13857 / NBRC 105044 / CNB-440).